Here is a 134-residue protein sequence, read N- to C-terminus: Terepressin/terephysin (134 aa).

Positions 1–33 (MKCSVLPRSRLSWTMCVLLLPLLMLMLEGGVQG) are cleaved as a signal peptide. An intrachain disulfide couples Cys34 to Cys39. The propeptide occupies 44–50 (KRAVDSV). Disulfide bonds link Cys56/Cys100, Cys59/Cys73, Cys67/Cys90, Cys74/Cys80, Cys107/Cys121, Cys115/Cys133, and Cys122/Cys127.

This sequence belongs to the vasopressin/oxytocin family. Contains 7 disulfide bonds. In terms of tissue distribution, expressed by the venom duct.

It is found in the secreted. The protein is Terepressin/terephysin of Terebra subulata (Chocolate spotted auger).